We begin with the raw amino-acid sequence, 342 residues long: MKIKVGILGASGYAGNELVRILLNHPKVEISYLGSSSSVGQNYQDLYPDTPLNLCFENKNLDELELDLLFLATPHEFSAKLLNENLLKKMKIIDLSADFRLKNPKDYELWYKFTHPNQELLQNAIYGLCELYKEEIKKASLVANPGCYTTCSILSLYPLFKEKIIDFNSVIIDAKSGVSGAGRSAKVENLFCEVNENIKAYGLASHRHTPEIEEHLSYVAKEKITLQFTPHLVPMQRGILISAYANLKENLQEQDIRDIYTKYYQNNKFIRLLPPQSLPQTRWVKSSNFADINFSIDQRTKRVIVLGAIDNLIKGAAGQAVQNMNLMFDFDEDEGLKFFANL.

Residue cysteine 147 is part of the active site.

Belongs to the NAGSA dehydrogenase family. Type 1 subfamily.

Its subcellular location is the cytoplasm. It catalyses the reaction N-acetyl-L-glutamate 5-semialdehyde + phosphate + NADP(+) = N-acetyl-L-glutamyl 5-phosphate + NADPH + H(+). The protein operates within amino-acid biosynthesis; L-arginine biosynthesis; N(2)-acetyl-L-ornithine from L-glutamate: step 3/4. Its function is as follows. Catalyzes the NADPH-dependent reduction of N-acetyl-5-glutamyl phosphate to yield N-acetyl-L-glutamate 5-semialdehyde. This chain is N-acetyl-gamma-glutamyl-phosphate reductase, found in Campylobacter jejuni subsp. doylei (strain ATCC BAA-1458 / RM4099 / 269.97).